Reading from the N-terminus, the 284-residue chain is Tropomyosin (284 aa).

Residues 1 to 284 are a coiled coil; sequence MEAIKNKMQA…DQTFAELTGY (284 aa). The disordered stretch occupies residues 22–43; the sequence is AEIAEQKSRDANLRAEKSEEEV.

It belongs to the tropomyosin family. Homodimer.

Its function is as follows. Tropomyosin, in association with the troponin complex, plays a central role in the calcium dependent regulation of muscle contraction. This chain is Tropomyosin, found in Lepidoglyphus destructor (Storage mite).